The following is a 231-amino-acid chain: Probable methylthioribulose-1-phosphate dehydratase (231 aa).

C90 serves as a coordination point for substrate. 2 residues coordinate Zn(2+): H108 and H110. The Proton donor/acceptor role is filled by E132. H188 provides a ligand contact to Zn(2+).

It belongs to the aldolase class II family. MtnB subfamily. The cofactor is Zn(2+).

The protein resides in the cytoplasm. The enzyme catalyses 5-(methylsulfanyl)-D-ribulose 1-phosphate = 5-methylsulfanyl-2,3-dioxopentyl phosphate + H2O. It participates in amino-acid biosynthesis; L-methionine biosynthesis via salvage pathway; L-methionine from S-methyl-5-thio-alpha-D-ribose 1-phosphate: step 2/6. In terms of biological role, catalyzes the dehydration of methylthioribulose-1-phosphate (MTRu-1-P) into 2,3-diketo-5-methylthiopentyl-1-phosphate (DK-MTP-1-P). This is Probable methylthioribulose-1-phosphate dehydratase from Anopheles gambiae (African malaria mosquito).